Here is a 51-residue protein sequence, read N- to C-terminus: Large ribosomal subunit protein eL39 (51 aa).

This sequence belongs to the eukaryotic ribosomal protein eL39 family.

The sequence is that of Large ribosomal subunit protein eL39 (rpl39e) from Methanothermobacter thermautotrophicus (strain ATCC 29096 / DSM 1053 / JCM 10044 / NBRC 100330 / Delta H) (Methanobacterium thermoautotrophicum).